The sequence spans 554 residues: Thermosome subunit alpha (554 aa).

The disordered stretch occupies residues 530 to 554 (PKKKEKKGKTGEEEEEEGGGSKFEF).

The protein belongs to the TCP-1 chaperonin family. Forms a Heterooligomeric complex of two stacked eight-membered rings.

In terms of biological role, molecular chaperone; binds unfolded polypeptides in vitro, and has a weak ATPase activity. The chain is Thermosome subunit alpha (thsA) from Aeropyrum pernix (strain ATCC 700893 / DSM 11879 / JCM 9820 / NBRC 100138 / K1).